The primary structure comprises 382 residues: Sulfate adenylyltransferase (382 aa).

It belongs to the sulfate adenylyltransferase family.

The catalysed reaction is sulfate + ATP + H(+) = adenosine 5'-phosphosulfate + diphosphate. It participates in sulfur metabolism; hydrogen sulfide biosynthesis; sulfite from sulfate: step 1/3. This chain is Sulfate adenylyltransferase, found in Ignicoccus hospitalis (strain KIN4/I / DSM 18386 / JCM 14125).